Consider the following 1938-residue polypeptide: Myosin-13 (1938 aa).

The region spanning D33–P82 is the Myosin N-terminal SH3-like domain. The region spanning D86–D782 is the Myosin motor domain. K130 carries the N6,N6,N6-trimethyllysine modification. G179–T186 serves as a coordination point for ATP. 2 actin-binding regions span residues L659–E681 and R761–G775. The region spanning L785–S814 is the IQ domain. The stretch at L843–E1938 forms a coiled coil. The interval A1917–E1938 is disordered. Residues K1927–E1938 are compositionally biased toward basic and acidic residues.

This sequence belongs to the TRAFAC class myosin-kinesin ATPase superfamily. Myosin family. Muscle myosin is a hexameric protein that consists of 2 heavy chain subunits (MHC), 2 alkali light chain subunits (MLC) and 2 regulatory light chain subunits (MLC-2). Specifically expressed in extraocular and laryngeal muscles.

It is found in the cytoplasm. Its subcellular location is the myofibril. In terms of biological role, fast twitching myosin mediating the high-velocity and low-tension contractions of specific striated muscles. The sequence is that of Myosin-13 (MYH13) from Homo sapiens (Human).